The following is a 339-amino-acid chain: Probable G-protein coupled receptor 33 (339 aa).

The Extracellular portion of the chain corresponds to 1–30; sequence MDRVNSSGHVISVSPSLTNSTGVPTPAPKA. Residues Asn-5 and Asn-19 are each glycosylated (N-linked (GlcNAc...) asparagine). Residues 31–53 traverse the membrane as a helical segment; sequence IIAAALFMSFIVGTISNGLYLWM. The Cytoplasmic segment spans residues 54–64; that stretch reads LKFKMQRTVNT. The helical transmembrane segment at 65-86 threads the bilayer; that stretch reads LLFFHLILSYFISTLILPFMAT. Over 87-103 the chain is Extracellular; that stretch reads SFLQDNHWAFGSVLCKV. Cys-101 and Cys-179 form a disulfide bridge. The helical transmembrane segment at 104 to 124 threads the bilayer; it reads FNSTLSVSMFASVFFLSAISV. Over 125-143 the chain is Cytoplasmic; that stretch reads DRYHLTLHPVWSQQHRTPR. A helical transmembrane segment spans residues 144 to 165; sequence WASRIALRIWILATILSIPYLV. The Extracellular portion of the chain corresponds to 166 to 209; that stretch reads FRETHDDHKGRIKCQNNYIVGTNWESSEHQTLGQWIHAACFGRR. The helical transmembrane segment at 210–230 threads the bilayer; the sequence is FLLGFLLPFLVIVFCYKRVAT. The Cytoplasmic segment spans residues 231–246; it reads KMKDKGLFKSSKPFKV. The chain crosses the membrane as a helical span at residues 247–268; that stretch reads MLTAVVSFFVCWMPYHVHSGLV. At 269-283 the chain is on the extracellular side; it reads LTKSQPLPSQLTLGL. Residues 284–303 traverse the membrane as a helical segment; that stretch reads AVVTISFNTVVSPILYLFTG. Residues 304-339 are Cytoplasmic-facing; sequence ENFEVFKKSILALFKSTFSDSSATERTQTLNSETEI.

It belongs to the G-protein coupled receptor 1 family.

The protein resides in the cell membrane. Functionally, orphan receptor; could be a chemoattractant receptor. This is Probable G-protein coupled receptor 33 (Gpr33) from Rattus rattus (Black rat).